The primary structure comprises 861 residues: DNA mismatch repair protein MutS (861 aa).

618–625 (GPNMGGKS) is an ATP binding site.

Belongs to the DNA mismatch repair MutS family.

This protein is involved in the repair of mismatches in DNA. It is possible that it carries out the mismatch recognition step. This protein has a weak ATPase activity. The sequence is that of DNA mismatch repair protein MutS from Shewanella sp. (strain MR-7).